The sequence spans 217 residues: Protein GrpE (217 aa).

This sequence belongs to the GrpE family. In terms of assembly, homodimer.

It is found in the cytoplasm. Functionally, participates actively in the response to hyperosmotic and heat shock by preventing the aggregation of stress-denatured proteins, in association with DnaK and GrpE. It is the nucleotide exchange factor for DnaK and may function as a thermosensor. Unfolded proteins bind initially to DnaJ; upon interaction with the DnaJ-bound protein, DnaK hydrolyzes its bound ATP, resulting in the formation of a stable complex. GrpE releases ADP from DnaK; ATP binding to DnaK triggers the release of the substrate protein, thus completing the reaction cycle. Several rounds of ATP-dependent interactions between DnaJ, DnaK and GrpE are required for fully efficient folding. The chain is Protein GrpE from Mycoplasma pneumoniae (strain ATCC 29342 / M129 / Subtype 1) (Mycoplasmoides pneumoniae).